An 809-amino-acid polypeptide reads, in one-letter code: LPS-assembly protein LptD (809 aa).

The first 22 residues, 1-22 (MRRALRLLPLPLSIAICLPAMA), serve as a signal peptide directing secretion.

It belongs to the LptD family. In terms of assembly, component of the lipopolysaccharide transport and assembly complex. Interacts with LptE and LptA.

The protein resides in the cell outer membrane. Its function is as follows. Together with LptE, is involved in the assembly of lipopolysaccharide (LPS) at the surface of the outer membrane. The polypeptide is LPS-assembly protein LptD (Xanthomonas euvesicatoria pv. vesicatoria (strain 85-10) (Xanthomonas campestris pv. vesicatoria)).